The primary structure comprises 417 residues: Probable medium-chain specific acyl-CoA dehydrogenase 10, mitochondrial (417 aa).

The transit peptide at 1 to 15 directs the protein to the mitochondrion; sequence MLSRIATSSLGLSRS. FAD-binding positions include 148–157 and 181–183; these read YCVTEPGAGS and WIT. S157 contacts substrate. 268–271 provides a ligand contact to substrate; that stretch reads DMTR. Residues 306–307 and 364–368 contribute to the FAD site; these read HQ and QIFGG. E391 functions as the Proton acceptor in the catalytic mechanism. G392 is a substrate binding site. An FAD-binding site is contributed by 393 to 395; the sequence is TSQ.

The protein belongs to the acyl-CoA dehydrogenase family. As to quaternary structure, homotetramer. Requires FAD as cofactor. In terms of tissue distribution, expressed in the epidermis and intestine.

The protein resides in the mitochondrion matrix. The enzyme catalyses a medium-chain 2,3-saturated fatty acyl-CoA + oxidized [electron-transfer flavoprotein] + H(+) = a medium-chain (2E)-enoyl-CoA + reduced [electron-transfer flavoprotein]. It participates in lipid metabolism; mitochondrial fatty acid beta-oxidation. Functionally, this enzyme is specific for acyl chain lengths of 4 to 16. The polypeptide is Probable medium-chain specific acyl-CoA dehydrogenase 10, mitochondrial (acdh-10) (Caenorhabditis elegans).